The primary structure comprises 104 residues: Large ribosomal subunit protein uL24 (104 aa).

This sequence belongs to the universal ribosomal protein uL24 family. In terms of assembly, part of the 50S ribosomal subunit.

Its function is as follows. One of two assembly initiator proteins, it binds directly to the 5'-end of the 23S rRNA, where it nucleates assembly of the 50S subunit. One of the proteins that surrounds the polypeptide exit tunnel on the outside of the subunit. This chain is Large ribosomal subunit protein uL24, found in Shewanella sediminis (strain HAW-EB3).